A 295-amino-acid chain; its full sequence is SPX domain-containing protein 1 (295 aa).

The SPX domain occupies 1–166; that stretch reads MKFGKSLSSQ…GALIRLPFIQ (166 aa). The interval 199–227 is disordered; it reads LSVSSEDGRGDSTNEDKPSNPSSSLVNGG. Residues 204–216 show a composition bias toward basic and acidic residues; sequence EDGRGDSTNEDKP.

As to quaternary structure, interacts (via SPX domain) with PHR2 (via C-terminus). Interacts with RLI1 in the nucleus to prevents its positive regulation of leaf inclination during phosphate (Pi) starvation. In terms of tissue distribution, predominantly expressed in roots and leaves. Localized in leaves lamina joints.

Its subcellular location is the nucleus. Involved in plant adaptation to phosphate (Pi) starvation. Inhibits PHR2 DNA-binding activity via a Pi-dependent protein interaction. Suppresses the regulation on expression of PT2 by PHR2 and accumulation of shoot Pi. Optimizes growth under phosphate-limited conditions through a negative feedback loop of the PSI (phosphate starvation-induced) signaling pathway. Regulates the expression of SPX2, SPX3 and SPX5. May be an important link between signal transduction pathways related to phosphate starvation and cold stress. Together with SPX2, plays a negative role in the regulation of leaf inclination by preventing RLI1 transcription factor activity in Pi depleted conditions. This Oryza sativa subsp. japonica (Rice) protein is SPX domain-containing protein 1.